A 624-amino-acid chain; its full sequence is DNA mismatch repair protein MutL (624 aa).

A compositionally biased stretch (basic and acidic residues) spans 340-355 (NKLDTDSHSQSHERGH). A disordered region spans residues 340-415 (NKLDTDSHSQ…RGGATSSYRQ (76 aa)). Composition is skewed to polar residues over residues 372-383 (HQTAPSTKASTE) and 391-415 (SPIS…SYRQ).

It belongs to the DNA mismatch repair MutL/HexB family.

This protein is involved in the repair of mismatches in DNA. It is required for dam-dependent methyl-directed DNA mismatch repair. May act as a 'molecular matchmaker', a protein that promotes the formation of a stable complex between two or more DNA-binding proteins in an ATP-dependent manner without itself being part of a final effector complex. This is DNA mismatch repair protein MutL from Shewanella sediminis (strain HAW-EB3).